The chain runs to 233 residues: Apoptosis regulator Bcl-2 (233 aa).

The BH4 signature appears at Asp10–Trp30. A disordered region spans residues Ala32 to Gly86. Residues Val87 to Arg101 carry the BH3 motif. The short motif at Glu130–Gly149 is the BH1 element. The short motif at Asn181–Tyr196 is the BH2 element. The helical transmembrane segment at Trp208–Ala228 threads the bilayer.

The protein belongs to the Bcl-2 family. As to quaternary structure, forms homodimers, and heterodimers with BAX, BAD, BAK and Bcl-X(L). Heterodimerization with BAX requires intact BH1 and BH2 motifs, and is necessary for anti-apoptotic activity. Also interacts with APAF1 and RAF-1. In terms of tissue distribution, in adult chicken expressed, in thymus, spleen, kidney, heart, ovary and brain, with the highest levels in the thymus. In the embryo, highly levels expressed in all tissues with high levels in the bursa of Fabricius.

The protein localises to the mitochondrion outer membrane. Its subcellular location is the nucleus membrane. It localises to the endoplasmic reticulum membrane. It is found in the cytoplasm. Functionally, suppresses apoptosis in a variety of cell systems including factor-dependent lymphohematopoietic and neural cells. Regulates cell death by controlling the mitochondrial membrane permeability. Appears to function in a feedback loop system with caspases. Inhibits caspase activity either by preventing the release of cytochrome c from the mitochondria and/or by binding to the apoptosis-activating factor (APAF-1). The sequence is that of Apoptosis regulator Bcl-2 (BCL2) from Gallus gallus (Chicken).